We begin with the raw amino-acid sequence, 317 residues long: Ribosomal large subunit pseudouridine synthase D (317 aa).

An S4 RNA-binding domain is found at 15 to 89; the sequence is WRLDRALASL…IPLEIVFEDE (75 aa). Asp-141 is a catalytic residue.

It belongs to the pseudouridine synthase RluA family.

Its subcellular location is the cytoplasm. The catalysed reaction is uridine(1911/1915/1917) in 23S rRNA = pseudouridine(1911/1915/1917) in 23S rRNA. Functionally, responsible for synthesis of pseudouridine from uracil at positions 1911, 1915 and 1917 in 23S ribosomal RNA. The sequence is that of Ribosomal large subunit pseudouridine synthase D from Zymomonas mobilis subsp. mobilis (strain ATCC 31821 / ZM4 / CP4).